A 107-amino-acid chain; its full sequence is Guanylate cyclase activator 2B (107 aa).

An N-terminal signal peptide occupies residues 1-21 (MSGSQLWAAVVVLLLLQSAQG). Residues 22–92 (VYIKYHGFQV…STFKALRTIA (71 aa)) constitute a propeptide that is removed on maturation. 3 cysteine pairs are disulfide-bonded: Cys63–Cys76, Cys96–Cys104, and Cys99–Cys107.

This sequence belongs to the guanylin family.

The protein resides in the secreted. In terms of biological role, endogenous activator of intestinal guanylate cyclase. It stimulates this enzyme through the same receptor binding region as the heat-stable enterotoxins. May be a potent physiological regulator of intestinal fluid and electrolyte transport. May be an autocrine/paracrine regulator of intestinal salt and water transport. The protein is Guanylate cyclase activator 2B (GUCA2B) of Notomys alexis (Spinifex hopping mouse).